The primary structure comprises 313 residues: Porphobilinogen deaminase (313 aa).

At cysteine 242 the chain carries S-(dipyrrolylmethanemethyl)cysteine.

It belongs to the HMBS family. As to quaternary structure, monomer. Dipyrromethane serves as cofactor.

It carries out the reaction 4 porphobilinogen + H2O = hydroxymethylbilane + 4 NH4(+). Its pathway is porphyrin-containing compound metabolism; protoporphyrin-IX biosynthesis; coproporphyrinogen-III from 5-aminolevulinate: step 2/4. In terms of biological role, tetrapolymerization of the monopyrrole PBG into the hydroxymethylbilane pre-uroporphyrinogen in several discrete steps. In Pseudomonas paraeruginosa (strain DSM 24068 / PA7) (Pseudomonas aeruginosa (strain PA7)), this protein is Porphobilinogen deaminase.